The following is a 760-amino-acid chain: Phosphoribosylformylglycinamidine synthase subunit PurL (760 aa).

The segment at 1 to 25 is disordered; that stretch reads MNMSLPADRDTAKKPSAQKPSAHAQ. The active site involves His69. The ATP site is built by Tyr72 and Lys115. Glu117 serves as a coordination point for Mg(2+). Residues 118 to 121 and Arg140 contribute to the substrate site; that span reads SHNH. His119 (proton acceptor) is an active-site residue. Asp141 is a binding site for Mg(2+). Residue Gln265 coordinates substrate. A Mg(2+)-binding site is contributed by Asp293. 337-339 provides a ligand contact to substrate; that stretch reads ESQ. ATP-binding residues include Asn519 and Gly556. Asn557 is a Mg(2+) binding site. A substrate-binding site is contributed by Ser559.

The protein belongs to the FGAMS family. Monomer. Part of the FGAM synthase complex composed of 1 PurL, 1 PurQ and 2 PurS subunits.

It is found in the cytoplasm. It carries out the reaction N(2)-formyl-N(1)-(5-phospho-beta-D-ribosyl)glycinamide + L-glutamine + ATP + H2O = 2-formamido-N(1)-(5-O-phospho-beta-D-ribosyl)acetamidine + L-glutamate + ADP + phosphate + H(+). It functions in the pathway purine metabolism; IMP biosynthesis via de novo pathway; 5-amino-1-(5-phospho-D-ribosyl)imidazole from N(2)-formyl-N(1)-(5-phospho-D-ribosyl)glycinamide: step 1/2. Part of the phosphoribosylformylglycinamidine synthase complex involved in the purines biosynthetic pathway. Catalyzes the ATP-dependent conversion of formylglycinamide ribonucleotide (FGAR) and glutamine to yield formylglycinamidine ribonucleotide (FGAM) and glutamate. The FGAM synthase complex is composed of three subunits. PurQ produces an ammonia molecule by converting glutamine to glutamate. PurL transfers the ammonia molecule to FGAR to form FGAM in an ATP-dependent manner. PurS interacts with PurQ and PurL and is thought to assist in the transfer of the ammonia molecule from PurQ to PurL. The protein is Phosphoribosylformylglycinamidine synthase subunit PurL of Tropheryma whipplei (strain TW08/27) (Whipple's bacillus).